We begin with the raw amino-acid sequence, 346 residues long: Histidinol-phosphate aminotransferase (346 aa).

Lysine 209 carries the N6-(pyridoxal phosphate)lysine modification.

This sequence belongs to the class-II pyridoxal-phosphate-dependent aminotransferase family. Histidinol-phosphate aminotransferase subfamily. As to quaternary structure, homodimer. Pyridoxal 5'-phosphate is required as a cofactor.

It catalyses the reaction L-histidinol phosphate + 2-oxoglutarate = 3-(imidazol-4-yl)-2-oxopropyl phosphate + L-glutamate. It participates in amino-acid biosynthesis; L-histidine biosynthesis; L-histidine from 5-phospho-alpha-D-ribose 1-diphosphate: step 7/9. The polypeptide is Histidinol-phosphate aminotransferase (Flavobacterium psychrophilum (strain ATCC 49511 / DSM 21280 / CIP 103535 / JIP02/86)).